We begin with the raw amino-acid sequence, 57 residues long: UPF0391 membrane protein RPC_3278 (57 aa).

The next 2 membrane-spanning stretches (helical) occupy residues 4 to 24 (WVIT…GGIA) and 30 to 50 (IAKI…VVGL).

This sequence belongs to the UPF0391 family.

The protein resides in the cell membrane. The chain is UPF0391 membrane protein RPC_3278 from Rhodopseudomonas palustris (strain BisB18).